Consider the following 136-residue polypeptide: Large ribosomal subunit protein uL16c (136 aa).

This sequence belongs to the universal ribosomal protein uL16 family. Part of the 50S ribosomal subunit.

The protein localises to the plastid. It is found in the chloroplast. The polypeptide is Large ribosomal subunit protein uL16c (Chloranthus spicatus (Chulantree)).